The chain runs to 404 residues: UBP1-associated protein 2C (404 aa).

A disordered region spans residues 1–29 (MDMMKKRKLDENGNGLNTNGGGTIGPTRL). 2 consecutive RRM domains span residues 75–152 (RKLF…LAAS) and 167–248 (RKIY…GKKG). Disordered regions lie at residues 246–270 (KKGG…HGEG) and 344–404 (GSGQ…PPNY).

Expressed in root apical and lateral meristems, young leaves and embryos.

Its subcellular location is the nucleus. In terms of biological role, heterogeneous nuclear ribonucleoprotein (hnRNP)-like protein that acts as a component of a complex regulating the turnover of mRNAs in the nucleus. Binds with high affinity to RNA molecules that contain U-rich sequences in 3'-UTRs. May function in complex with UBP1 and contribute to the stabilization of mRNAs in the nucleus. This chain is UBP1-associated protein 2C (UBA2C), found in Arabidopsis thaliana (Mouse-ear cress).